The sequence spans 187 residues: Calmodulin-like protein 1 (187 aa).

Position 2 is an N-acetylalanine (Ala2). EF-hand domains are found at residues 8 to 43 (EQIVEFREAFSLFDKDGDGSITTKELGTVMRSLGQN), 44 to 79 (PTEAELQDMISEVDADSNGNIEFKEFLGLMARKLRD), 81 to 116 (DSEEELKEAFRVFDKDQNGFISAAELRHVMANIGER), and 117 to 152 (LTDEEVGEMISEADVDGDGQINYEEFVKCMMAKKRR). Ca(2+)-binding residues include Asp21, Asp23, Asp25, Ser27, Glu32, Asp57, Asp59, Asn61, Asn63, Glu68, Asp94, Asp96, Asn98, Glu105, Asp130, Asp132, Asp134, Gln136, and Glu141. The segment at 153 to 187 (KRIEEKREHDGGSRTKSAGPSAAPASKRGQKCVIL) is disordered. Residues 154-165 (RIEEKREHDGGS) are compositionally biased toward basic and acidic residues. Low complexity predominate over residues 169-178 (SAGPSAAPAS). Cys184 bears the Cysteine methyl ester mark. Cys184 carries the S-farnesyl cysteine lipid modification. Residues 185–187 (VIL) constitute a propeptide, removed in mature form.

Belongs to the calmodulin family. Expressed in roots, etiolated shoots and flowers.

It is found in the membrane. In terms of biological role, calcium-binding protein that binds and activates CAMK1, a calcium/calmodulin-dependent kinase. This Oryza sativa subsp. indica (Rice) protein is Calmodulin-like protein 1 (CML1).